We begin with the raw amino-acid sequence, 485 residues long: MNEPTQITDTKKRYAAGVLKYAQMGYWNGDYVPKDTDILALFRITPQDGVDPIEAAAAVAGESSTATWTVVWTDRLTACDMYRAKAYKVEPVPNNPGQYFCYVAYDLSLFEEGSIANVTASIIGNVFSFKPLKAARLEDMKFPVSYVKTFAGPPTGIVVERERLDKFGRPLLGATTKPKLGLSGRNYGRVVYEGLKGGLDFMKDDENINSQPFMHWRDRFLFVMDAVNKASAATGEVKGSYLNVTAGTMEEMYRRAEFAKELGSVIIMIDLVVGYTAIQSMSNWARQNDMVLHMHRAGHGTYTRQKNHGVSFRVIAKWLRMAGVDHLHTGTAVGKLEGDPLTVQGYYNVCRDTHTKVDLPRGIFFDQDWGALKKVMPVASGGIHAGQMHQLIDLFGDDVVLQFGGGTIGHPQGIQAGATANRVALEAMVLARNEGRDIKNEGPQILRDAAKSCTPLAAALDTWGDITFNYTSTDTSDYVPTPSVA.

Substrate-binding residues include Asn125 and Thr175. The active-site Proton acceptor is the Lys177. Lys179 provides a ligand contact to substrate. Positions 203, 205, and 206 each coordinate Mg(2+). Lys203 carries the N6-carboxylysine modification. Residue His295 is the Proton acceptor of the active site. Substrate is bound by residues Arg296, His328, and Ser380.

Belongs to the RuBisCO large chain family. Type I subfamily. In terms of assembly, heterohexadecamer of 8 large chains and 8 small chains. It depends on Mg(2+) as a cofactor.

It catalyses the reaction 2 (2R)-3-phosphoglycerate + 2 H(+) = D-ribulose 1,5-bisphosphate + CO2 + H2O. The catalysed reaction is D-ribulose 1,5-bisphosphate + O2 = 2-phosphoglycolate + (2R)-3-phosphoglycerate + 2 H(+). RuBisCO catalyzes two reactions: the carboxylation of D-ribulose 1,5-bisphosphate, the primary event in carbon dioxide fixation, as well as the oxidative fragmentation of the pentose substrate. Both reactions occur simultaneously and in competition at the same active site. The sequence is that of Ribulose bisphosphate carboxylase large chain 2 from Methylibium petroleiphilum (strain ATCC BAA-1232 / LMG 22953 / PM1).